The sequence spans 355 residues: Phosphoribosylformylglycinamidine cyclo-ligase (355 aa).

Belongs to the AIR synthase family.

The protein localises to the cytoplasm. It carries out the reaction 2-formamido-N(1)-(5-O-phospho-beta-D-ribosyl)acetamidine + ATP = 5-amino-1-(5-phospho-beta-D-ribosyl)imidazole + ADP + phosphate + H(+). It participates in purine metabolism; IMP biosynthesis via de novo pathway; 5-amino-1-(5-phospho-D-ribosyl)imidazole from N(2)-formyl-N(1)-(5-phospho-D-ribosyl)glycinamide: step 2/2. The sequence is that of Phosphoribosylformylglycinamidine cyclo-ligase from Methylobacterium sp. (strain 4-46).